The primary structure comprises 213 residues: Probable aspartate aminotransferase (213 aa).

L-aspartate-binding residues include Gly-47, Trp-133, and Asn-183.

This sequence belongs to the class-I pyridoxal-phosphate-dependent aminotransferase family. In terms of assembly, homodimer. It depends on pyridoxal 5'-phosphate as a cofactor.

It localises to the cytoplasm. The enzyme catalyses L-aspartate + 2-oxoglutarate = oxaloacetate + L-glutamate. In Streptomyces griseus, this protein is Probable aspartate aminotransferase (aspC).